The primary structure comprises 314 residues: GTP cyclohydrolase FolE2 (314 aa).

Positions 290-314 (DASAWSAPQAAAPDQQESFATGNER) are disordered. The span at 291–304 (ASAWSAPQAAAPDQ) shows a compositional bias: low complexity. Positions 305–314 (QESFATGNER) are enriched in polar residues.

Belongs to the GTP cyclohydrolase IV family.

The enzyme catalyses GTP + H2O = 7,8-dihydroneopterin 3'-triphosphate + formate + H(+). Its pathway is cofactor biosynthesis; 7,8-dihydroneopterin triphosphate biosynthesis; 7,8-dihydroneopterin triphosphate from GTP: step 1/1. Converts GTP to 7,8-dihydroneopterin triphosphate. The polypeptide is GTP cyclohydrolase FolE2 (Pseudomonas putida (strain ATCC 47054 / DSM 6125 / CFBP 8728 / NCIMB 11950 / KT2440)).